Reading from the N-terminus, the 217-residue chain is Enolase-phosphatase E1 (217 aa).

Positions 9 and 11 each coordinate Mg(2+). Substrate-binding positions include 112–113 (SS) and Lys151. Asp176 serves as a coordination point for Mg(2+).

It belongs to the HAD-like hydrolase superfamily. MasA/MtnC family. As to quaternary structure, monomer. Mg(2+) is required as a cofactor.

The protein localises to the cytoplasm. The protein resides in the nucleus. It carries out the reaction 5-methylsulfanyl-2,3-dioxopentyl phosphate + H2O = 1,2-dihydroxy-5-(methylsulfanyl)pent-1-en-3-one + phosphate. It participates in amino-acid biosynthesis; L-methionine biosynthesis via salvage pathway; L-methionine from S-methyl-5-thio-alpha-D-ribose 1-phosphate: step 3/6. The protein operates within amino-acid biosynthesis; L-methionine biosynthesis via salvage pathway; L-methionine from S-methyl-5-thio-alpha-D-ribose 1-phosphate: step 4/6. Its function is as follows. Bifunctional enzyme that catalyzes the enolization of 2,3-diketo-5-methylthiopentyl-1-phosphate (DK-MTP-1-P) into the intermediate 2-hydroxy-3-keto-5-methylthiopentenyl-1-phosphate (HK-MTPenyl-1-P), which is then dephosphorylated to form the acireductone 1,2-dihydroxy-3-keto-5-methylthiopentene (DHK-MTPene). The polypeptide is Enolase-phosphatase E1 (Lachancea thermotolerans (strain ATCC 56472 / CBS 6340 / NRRL Y-8284) (Yeast)).